The primary structure comprises 441 residues: Platelet-activating factor acetylhydrolase (441 aa).

The N-terminal stretch at 1–21 is a signal peptide; that stretch reads MVPPKLHVLFCLCGCLAVVYP. The Nucleophile role is filled by Ser-273. Residues Asp-296 and His-351 each act as charge relay system in the active site. Residues Asn-423 and Asn-433 are each glycosylated (N-linked (GlcNAc...) asparagine).

The protein belongs to the AB hydrolase superfamily. Lipase family. Post-translationally, N-glycosylated. Macrophage-derived PLA2G7 carries sialylated complex-type N-glycans that hinder its binding to HDL particles. Plasma. Secreted by macrophages (at protein level).

The protein localises to the secreted. It localises to the extracellular space. It catalyses the reaction a 1-O-alkyl-2-acetyl-sn-glycero-3-phosphocholine + H2O = a 1-O-alkyl-sn-glycero-3-phosphocholine + acetate + H(+). The enzyme catalyses 1-O-decyl-2-acetyl-sn-glycero-3-phosphocholine + H2O = 1-O-decyl-sn-glycero-3-phosphocholine + acetate + H(+). The catalysed reaction is 1-O-dodecyl-2-acetyl-sn-glycero-3-phosphocholine + H2O = 1-O-dodecyl-sn-glycero-3-phosphocholine + acetate + H(+). It carries out the reaction 1-O-tetradecyl-2-acetyl-sn-glycero-3-phosphocholine + H2O = 1-O-tetradecyl-sn-glycero-3-phosphocholine + acetate + H(+). It catalyses the reaction 1-O-hexadecyl-2-acetyl-sn-glycero-3-phosphocholine + H2O = 1-O-hexadecyl-sn-glycero-3-phosphocholine + acetate + H(+). The enzyme catalyses 1-O-octadecyl-2-acetyl-sn-glycero-3-phosphocholine + H2O = 1-O-octadecyl-sn-glycero-3-phosphocholine + acetate + H(+). The catalysed reaction is 1-hexadecanoyl-2-acetyl-sn-glycero-3-phosphocholine + H2O = 1-hexadecanoyl-sn-glycero-3-phosphocholine + acetate + H(+). It carries out the reaction 1-hexadecanoyl-2-propionyl-sn-glycero-3-phosphocholine + H2O = propanoate + 1-hexadecanoyl-sn-glycero-3-phosphocholine + H(+). It catalyses the reaction 1-hexadecanoyl-2-butanoyl-sn-glycero-3-phosphocholine + H2O = butanoate + 1-hexadecanoyl-sn-glycero-3-phosphocholine + H(+). The enzyme catalyses 1-hexadecanoyl-2-pentanoyl-sn-glycero-3-phosphocholine + H2O = pentanoate + 1-hexadecanoyl-sn-glycero-3-phosphocholine + H(+). The catalysed reaction is 1-hexadecanoyl-2-glutaroyl-sn-glycero-3-phosphocholine + H2O = glutarate + 1-hexadecanoyl-sn-glycero-3-phosphocholine + H(+). It carries out the reaction 1-hexadecanoyl-2-(5-oxopentanoyl)-sn-glycero-3-phosphocholine + H2O = 5-oxopentanoate + 1-hexadecanoyl-sn-glycero-3-phosphocholine + H(+). It catalyses the reaction 1-hexadecanoyl-2-(9-oxononanoyl)-sn-glycero-3-phosphocholine + H2O = 9-oxononanoate + 1-hexadecanoyl-sn-glycero-3-phosphocholine + H(+). The enzyme catalyses 1-hexadecanoyl-2-[9-hydroperoxy-(10E-octadecenoyl)]-sn-glycero-3-phosphocholine + H2O = 9-hydroperoxy-10E-octadecenoate + 1-hexadecanoyl-sn-glycero-3-phosphocholine + H(+). The catalysed reaction is 1-hexadecanoyl-2-(10-hydroperoxy-8E-octadecenoyl)-sn-glycero-3-phosphocholine + H2O = 10-hydroperoxy-(8E)-octadecenoate + 1-hexadecanoyl-sn-glycero-3-phosphocholine + H(+). In terms of biological role, lipoprotein-associated calcium-independent phospholipase A2 involved in phospholipid catabolism during inflammatory and oxidative stress response. At the lipid-aqueous interface, hydrolyzes the ester bond of fatty acyl group attached at sn-2 position of phospholipids (phospholipase A2 activity). Specifically targets phospholipids with a short-chain fatty acyl group at sn-2 position. Can hydrolyze phospholipids with long fatty acyl chains, only if they carry oxidized functional groups. Hydrolyzes and inactivates platelet-activating factor (PAF, 1-O-alkyl-2-acetyl-sn-glycero-3-phosphocholine), a potent pro-inflammatory signaling lipid that acts through PTAFR on various innate immune cells. Hydrolyzes oxidatively truncated phospholipids carrying an aldehyde group at omega position, preventing their accumulation in low-density lipoprotein (LDL) particles and uncontrolled pro-inflammatory effects. As part of high-density lipoprotein (HDL) particles, can hydrolyze phospholipids having long-chain fatty acyl hydroperoxides at sn-2 position and protect against potential accumulation of these oxylipins in the vascular wall. Catalyzes the release from membrane phospholipids of F2-isoprostanes, lipid biomarkers of cellular oxidative damage. This Homo sapiens (Human) protein is Platelet-activating factor acetylhydrolase (PLA2G7).